We begin with the raw amino-acid sequence, 574 residues long: Interleukin-22 receptor subunit alpha-1 (574 aa).

Positions 1 to 15 (MRTLLTILTVGSLAA) are cleaved as a signal peptide. The Extracellular portion of the chain corresponds to 16-228 (HAPEDPSDLL…VKTLPDRTWT (213 aa)). 2 consecutive Fibronectin type-III domains span residues 17–124 (APED…LKPP) and 141–221 (PTPT…RVKT). The cysteines at positions 71 and 79 are disulfide-linked. N-linked (GlcNAc...) asparagine glycans are attached at residues N80 and N172. A disulfide bond links C128 and C217. A helical membrane pass occupies residues 229 to 249 (YSFSGAFLFSMGFLVAVLCYL). Topologically, residues 250–574 (SYRYVTKPPA…GLALTVQWES (325 aa)) are cytoplasmic. Disordered regions lie at residues 388 to 440 (SSYA…AGSC), 454 to 489 (AMEE…EGTP), and 507 to 560 (HPMS…TELD). Phosphoserine occurs at positions 410 and 414.

This sequence belongs to the type II cytokine receptor family. In terms of assembly, heterodimer with IL10RB and with IL20RB. IL22 binding to heterodimer is greater than binding to IL22RA1 alone. Interacts with FBXW12; the interaction promotes ubiquitination of IL22RA1. Post-translationally, ubiquitinated. Expressed in colon, liver, lung, pancreas and kidney. No expression in immune cells such as monocytes, T-cells, and NK-cells. Expressed in keratinocytes of normal skin as well as in psoriatic skin lesion. Detected in normal blood brain barrier endothelial cells as well as in multiple sclerosis lesions; Strongly expressed on central nervous system vessels within infiltrated multiple sclerosis lesions. Overexpressed in synovial fluid cells from rheumatoid arthritis and spondyloarthropathy patients.

Its subcellular location is the cell membrane. Component of the receptor for IL20, IL22 and IL24. Component of IL22 receptor formed by IL22RA1 and IL10RB enabling IL22 signaling via JAK/STAT pathways. IL22 also induces activation of MAPK1/MAPK3 and Akt kinases pathways. Component of one of the receptor for IL20 and IL24 formed by IL22RA1 and IL20RB also signaling through STATs activation. Mediates IL24 antiangiogenic activity as well as IL24 inhibitory effect on endothelial cell tube formation and differentiation. The polypeptide is Interleukin-22 receptor subunit alpha-1 (IL22RA1) (Homo sapiens (Human)).